The following is a 246-amino-acid chain: Probable ABC transporter permease protein BMEII0107 (246 aa).

Transmembrane regions (helical) follow at residues 12 to 32 (LLSFAVGIGGWYLLTATGAVV), 63 to 83 (VLSGFVLGVALAIPVGFLMGW), 94 to 114 (WVQFFRMIPPLAVIPLAIVTL), 122 to 142 (IFVIFLASFLSSVVATYQGVI), 172 to 192 (VPFILVGVRIGLGSAWATVVA), and 211 to 231 (LYYDLPTIFVSLVTIGILGLF). The region spanning 56 to 236 (IFASLRRVLS…ILGLFMDRLL (181 aa)) is the ABC transmembrane type-1 domain.

It belongs to the binding-protein-dependent transport system permease family. In terms of assembly, the complex is composed of two ATP-binding proteins (BMEII0108), two transmembrane proteins (BMEII0107) and a solute-binding protein (BMEII0109).

It localises to the cell inner membrane. In terms of biological role, probably part of an ABC transporter complex. Probably responsible for the translocation of the substrate across the membrane. The sequence is that of Probable ABC transporter permease protein BMEII0107 from Brucella melitensis biotype 1 (strain ATCC 23456 / CCUG 17765 / NCTC 10094 / 16M).